The primary structure comprises 731 residues: Putative beta-galactosidase (731 aa).

The first 29 residues, 1 to 29, serve as a signal peptide directing secretion; the sequence is MLCGKENNVMKMMLVYVFVLITLISCVYG. Glu187 (proton donor) is an active-site residue. Catalysis depends on Glu257, which acts as the Nucleophile.

It belongs to the glycosyl hydrolase 35 family. Senescing flower petals.

It carries out the reaction Hydrolysis of terminal non-reducing beta-D-galactose residues in beta-D-galactosides.. The polypeptide is Putative beta-galactosidase (CARSR12) (Dianthus caryophyllus (Carnation)).